The chain runs to 574 residues: MEPNSLRTKVPAFLSDLGKATLRGIRKCPRCGTYNGTRGLSCKNKTCGTIFRYGARKQPSVEAVKIITGSDLQVYSVRQRDRGPDYRCFVELGVSETTIQTVDGTIITQLSSGRCYVPSCLKAATQGVVENQCQHIKLAVNCQAEATPLTLKSSVLNAMQASPETKQTIWQLATEPTGPLVQRITKNILVVKCKASQKHSLGYLHTSFVQKISAKSLPERRFFCSCQTLKSHKSNASKDEVAQRCIHFFACICAFASDETLAQEFSDFLNFDSSGLKEIIVPQLGCHSESTVSACESTASKSKKRRKDEVSGAQRNSSPLPQDAVSSNLRKSGLKKPVVASSLKRQACGQLLDEAQVTLSFQDWLASVTERIHQTMHYQFDGKPEPLVFHIPQSFFDALQQRISIGSAKKRLPNSTTAFVRKDALPLGTFSKYTWHITNILQVKQILDTPEMPLEITRSFIQNRDGTYELFKCPKVEVESIAETYGRIEKQPVLRPLELKTFLKVGNTSPDQKEPTPFIIEWIPDILPQSKIGELRIKFEYGHHRNGHVAEYQDHRPALDQPLELAPLTTITFP.

Positions 297–327 (STASKSKKRRKDEVSGAQRNSSPLPQDAVSS) are disordered. Residues 313-327 (AQRNSSPLPQDAVSS) show a composition bias toward polar residues.

This is an uncharacterized protein from Macaca fascicularis (Crab-eating macaque).